We begin with the raw amino-acid sequence, 63 residues long: Large ribosomal subunit protein bL32 (63 aa).

Residues 1-23 (MATPKAKVSKSRRDKRRAQFTAR) are disordered. The span at 7-18 (KVSKSRRDKRRA) shows a compositional bias: basic residues.

The protein belongs to the bacterial ribosomal protein bL32 family.

This chain is Large ribosomal subunit protein bL32, found in Chlorobium phaeobacteroides (strain BS1).